A 210-amino-acid polypeptide reads, in one-letter code: Small ribosomal subunit protein uS4 (210 aa).

The S4 RNA-binding domain occupies 99–170 (RRLDNAVFRA…NLEAVVRRGV (72 aa)).

The protein belongs to the universal ribosomal protein uS4 family. As to quaternary structure, part of the 30S ribosomal subunit. Contacts protein S5. The interaction surface between S4 and S5 is involved in control of translational fidelity.

Its function is as follows. One of the primary rRNA binding proteins, it binds directly to 16S rRNA where it nucleates assembly of the body of the 30S subunit. With S5 and S12 plays an important role in translational accuracy. The protein is Small ribosomal subunit protein uS4 of Desulfotalea psychrophila (strain LSv54 / DSM 12343).